Consider the following 54-residue polypeptide: Gene product 16.6 (54 aa).

Belongs to the phi29likevirus gp16.6 family.

The polypeptide is Gene product 16.6 (16.6) (Bacillus subtilis (Bacteriophage phi-15)).